The chain runs to 233 residues: 5'-methylthioadenosine/S-adenosylhomocysteine nucleosidase (233 aa).

Glu12 acts as the Proton acceptor in catalysis. Residues Gly78, Ile156, and 177-178 (ME) contribute to the substrate site. Residue Asp201 is the Proton donor of the active site.

The protein belongs to the PNP/UDP phosphorylase family. MtnN subfamily.

It carries out the reaction S-adenosyl-L-homocysteine + H2O = S-(5-deoxy-D-ribos-5-yl)-L-homocysteine + adenine. The enzyme catalyses S-methyl-5'-thioadenosine + H2O = 5-(methylsulfanyl)-D-ribose + adenine. The catalysed reaction is 5'-deoxyadenosine + H2O = 5-deoxy-D-ribose + adenine. Its pathway is amino-acid biosynthesis; L-methionine biosynthesis via salvage pathway; S-methyl-5-thio-alpha-D-ribose 1-phosphate from S-methyl-5'-thioadenosine (hydrolase route): step 1/2. In terms of biological role, catalyzes the irreversible cleavage of the glycosidic bond in both 5'-methylthioadenosine (MTA) and S-adenosylhomocysteine (SAH/AdoHcy) to adenine and the corresponding thioribose, 5'-methylthioribose and S-ribosylhomocysteine, respectively. Also cleaves 5'-deoxyadenosine, a toxic by-product of radical S-adenosylmethionine (SAM) enzymes, into 5-deoxyribose and adenine. The sequence is that of 5'-methylthioadenosine/S-adenosylhomocysteine nucleosidase from Listeria monocytogenes serotype 4b (strain F2365).